Here is a 245-residue protein sequence, read N- to C-terminus: MQTPSVFMRKTAKYQIRETIITVIADEPYHPVCLDTIYRVRGELEAFIARDPYFQSTLEPYECPADAPDVVRRMCAATAKAGVGPMAAVAGTIGCMAVEAMAAAGAKYALVDNGGDIALVNDEPVVVGIYAGESPIKGLGLEIPPRDTILGVCTSSATVGPSISFGNSDAALVISDDVSLADAAATALGNRIVDVASLATAFDFLKEIPEVTGAVGIIGDKMATYGRLPKIVRAHVDYEKITKGD.

Belongs to the UPF0280 family.

The protein is UPF0280 protein UNCMA_16740 of Methanocella arvoryzae (strain DSM 22066 / NBRC 105507 / MRE50).